Here is a 331-residue protein sequence, read N- to C-terminus: Adenosine deaminase (331 aa).

Residues histidine 12 and histidine 14 each coordinate Zn(2+). Positions 14, 16, and 170 each coordinate substrate. A Zn(2+)-binding site is contributed by histidine 197. Glutamate 200 acts as the Proton donor in catalysis. A Zn(2+)-binding site is contributed by aspartate 278. A substrate-binding site is contributed by aspartate 279.

The protein belongs to the metallo-dependent hydrolases superfamily. Adenosine and AMP deaminases family. Adenosine deaminase subfamily. Requires Zn(2+) as cofactor.

It carries out the reaction adenosine + H2O + H(+) = inosine + NH4(+). The catalysed reaction is 2'-deoxyadenosine + H2O + H(+) = 2'-deoxyinosine + NH4(+). Functionally, catalyzes the hydrolytic deamination of adenosine and 2-deoxyadenosine. In Shewanella baltica (strain OS223), this protein is Adenosine deaminase.